We begin with the raw amino-acid sequence, 611 residues long: Dihydroxy-acid dehydratase (611 aa).

Position 81 (aspartate 81) interacts with Mg(2+). [2Fe-2S] cluster is bound at residue cysteine 122. Mg(2+) is bound by residues aspartate 123 and lysine 124. Lysine 124 is subject to N6-carboxylysine. Cysteine 195 lines the [2Fe-2S] cluster pocket. Mg(2+) is bound at residue glutamate 491. Catalysis depends on serine 517, which acts as the Proton acceptor.

This sequence belongs to the IlvD/Edd family. As to quaternary structure, homodimer. The cofactor is [2Fe-2S] cluster. Requires Mg(2+) as cofactor.

It carries out the reaction (2R)-2,3-dihydroxy-3-methylbutanoate = 3-methyl-2-oxobutanoate + H2O. It catalyses the reaction (2R,3R)-2,3-dihydroxy-3-methylpentanoate = (S)-3-methyl-2-oxopentanoate + H2O. It participates in amino-acid biosynthesis; L-isoleucine biosynthesis; L-isoleucine from 2-oxobutanoate: step 3/4. The protein operates within amino-acid biosynthesis; L-valine biosynthesis; L-valine from pyruvate: step 3/4. Its function is as follows. Functions in the biosynthesis of branched-chain amino acids. Catalyzes the dehydration of (2R,3R)-2,3-dihydroxy-3-methylpentanoate (2,3-dihydroxy-3-methylvalerate) into 2-oxo-3-methylpentanoate (2-oxo-3-methylvalerate) and of (2R)-2,3-dihydroxy-3-methylbutanoate (2,3-dihydroxyisovalerate) into 2-oxo-3-methylbutanoate (2-oxoisovalerate), the penultimate precursor to L-isoleucine and L-valine, respectively. This Brucella canis (strain ATCC 23365 / NCTC 10854 / RM-666) protein is Dihydroxy-acid dehydratase.